A 115-amino-acid chain; its full sequence is Large ribosomal subunit protein eL30 (115 aa).

2 positions are modified to phosphoserine: Ser-10 and Ser-16. An N6-acetyllysine; alternate modification is found at Lys-26. Lys-26 is covalently cross-linked (Glycyl lysine isopeptide (Lys-Gly) (interchain with G-Cter in SUMO2); alternate).

It belongs to the eukaryotic ribosomal protein eL30 family. Component of the large ribosomal subunit.

The protein resides in the cytoplasm. Functionally, component of the large ribosomal subunit. The ribosome is a large ribonucleoprotein complex responsible for the synthesis of proteins in the cell. This is Large ribosomal subunit protein eL30 (RPL30) from Homo sapiens (Human).